Consider the following 323-residue polypeptide: Ubiquinone biosynthesis protein COQ4, mitochondrial (323 aa).

The Zn(2+) site is built by His-203, Asp-204, His-207, and Glu-219.

Belongs to the COQ4 family. Component of a multi-subunit COQ enzyme complex, composed of at least COQ3, COQ4, COQ5, COQ6, COQ7 and COQ9. The cofactor is Zn(2+).

It is found in the mitochondrion inner membrane. It catalyses the reaction a 4-hydroxy-3-methoxy-5-(all-trans-polyprenyl)benzoate + H(+) = a 2-methoxy-6-(all-trans-polyprenyl)phenol + CO2. Its pathway is cofactor biosynthesis; ubiquinone biosynthesis. In terms of biological role, lyase that catalyzes the C1-decarboxylation of 4-hydroxy-3-methoxy-5-(all-trans-polyprenyl)benzoic acid into 2-methoxy-6-(all-trans-polyprenyl)phenol during ubiquinone biosynthesis. The polypeptide is Ubiquinone biosynthesis protein COQ4, mitochondrial (Eremothecium gossypii (strain ATCC 10895 / CBS 109.51 / FGSC 9923 / NRRL Y-1056) (Yeast)).